Reading from the N-terminus, the 362-residue chain is Probable dual-specificity RNA methyltransferase RlmN (362 aa).

The active-site Proton acceptor is E91. Positions 97–329 constitute a Radical SAM core domain; the sequence is QHYGLSVCVT…KKNGVNCVVR (233 aa). C104 and C340 are oxidised to a cystine. [4Fe-4S] cluster-binding residues include C111, C115, and C118. Residues 163-164, S195, 218-220, and N296 contribute to the S-adenosyl-L-methionine site; these read GE and SLH. Residue C340 is the S-methylcysteine intermediate of the active site.

This sequence belongs to the radical SAM superfamily. RlmN family. Requires [4Fe-4S] cluster as cofactor.

Its subcellular location is the cytoplasm. The catalysed reaction is adenosine(2503) in 23S rRNA + 2 reduced [2Fe-2S]-[ferredoxin] + 2 S-adenosyl-L-methionine = 2-methyladenosine(2503) in 23S rRNA + 5'-deoxyadenosine + L-methionine + 2 oxidized [2Fe-2S]-[ferredoxin] + S-adenosyl-L-homocysteine. It carries out the reaction adenosine(37) in tRNA + 2 reduced [2Fe-2S]-[ferredoxin] + 2 S-adenosyl-L-methionine = 2-methyladenosine(37) in tRNA + 5'-deoxyadenosine + L-methionine + 2 oxidized [2Fe-2S]-[ferredoxin] + S-adenosyl-L-homocysteine. Functionally, specifically methylates position 2 of adenine 2503 in 23S rRNA and position 2 of adenine 37 in tRNAs. The polypeptide is Probable dual-specificity RNA methyltransferase RlmN (Streptococcus gordonii (strain Challis / ATCC 35105 / BCRC 15272 / CH1 / DL1 / V288)).